Consider the following 268-residue polypeptide: Ribosomal RNA small subunit methyltransferase A (268 aa).

S-adenosyl-L-methionine-binding residues include Asn-23, Ile-25, Gly-50, Glu-72, Asp-97, and Asn-116.

The protein belongs to the class I-like SAM-binding methyltransferase superfamily. rRNA adenine N(6)-methyltransferase family. RsmA subfamily.

The protein localises to the cytoplasm. The enzyme catalyses adenosine(1518)/adenosine(1519) in 16S rRNA + 4 S-adenosyl-L-methionine = N(6)-dimethyladenosine(1518)/N(6)-dimethyladenosine(1519) in 16S rRNA + 4 S-adenosyl-L-homocysteine + 4 H(+). In terms of biological role, specifically dimethylates two adjacent adenosines (A1518 and A1519) in the loop of a conserved hairpin near the 3'-end of 16S rRNA in the 30S particle. May play a critical role in biogenesis of 30S subunits. This Rickettsia bellii (strain RML369-C) protein is Ribosomal RNA small subunit methyltransferase A.